A 524-amino-acid chain; its full sequence is uncharacterized protein (524 aa).

Residues 1–65 are disordered; the sequence is MSDPFFTRPE…IDEENEDTYE (65 aa). Over residues 21–32 the composition is skewed to basic and acidic residues; the sequence is SKREKENQKLER. The span at 51–64 shows a compositional bias: acidic residues; it reads GFEDEIDEENEDTY. 7 WD repeats span residues 131-176, 206-245, 248-287, 290-329, 342-380, 409-448, and 457-503; these read IETA…DTEN, DHVK…PQHC, HHRD…YIET, GHQD…QLVF, YMEG…PLFT, PQPR…RSFE, and SVYG…PNSG.

The protein localises to the nucleus. This is an uncharacterized protein from Schizosaccharomyces pombe (strain 972 / ATCC 24843) (Fission yeast).